Here is a 1066-residue protein sequence, read N- to C-terminus: DNA-directed RNA polymerase subunit beta (1066 aa).

This sequence belongs to the RNA polymerase beta chain family. In plastids the minimal PEP RNA polymerase catalytic core is composed of four subunits: alpha, beta, beta', and beta''. When a (nuclear-encoded) sigma factor is associated with the core the holoenzyme is formed, which can initiate transcription.

The protein localises to the plastid. It localises to the chloroplast. The enzyme catalyses RNA(n) + a ribonucleoside 5'-triphosphate = RNA(n+1) + diphosphate. Its function is as follows. DNA-dependent RNA polymerase catalyzes the transcription of DNA into RNA using the four ribonucleoside triphosphates as substrates. The sequence is that of DNA-directed RNA polymerase subunit beta from Coffea arabica (Arabian coffee).